A 432-amino-acid polypeptide reads, in one-letter code: Adhesin YadA (432 aa).

The signal sequence occupies residues 1–25 (MTKDFKISVSAALISALFSSPYAFA). The interval 26–340 (EEPEDGNDGI…KKAISESNQY (315 aa)) is surface exposed passenger domain. Positions 242–263 (VNVAQLKKEMAETLENARKETL) form a coiled coil. The interval 341–379 (TDHKFSQLDNRLDKLDKRVDKGLASSAALNSLFQPYGVG) is outer membrane translocation of the passenger domain. The next 4 membrane-spanning stretches (beta stranded) occupy residues 379–389 (GKVNFTAGVGG), 393–404 (SQALAIGSGYRV), 411–417 (KAGVAYA), and 421–432 (NVMYNASFNIEW). The interval 380–432 (KVNFTAGVGGYRSSQALAIGSGYRVNESVALKAGVAYAGSSNVMYNASFNIEW) is translocator domain.

The protein belongs to the autotransporter-2 (AT-2) (TC 1.B.40) family. In terms of assembly, homotrimer.

It is found in the cell surface. The protein resides in the cell outer membrane. Functionally, collagen-binding outer membrane protein forming a fibrillar matrix on the bacterial cell surface. Promotes attachment to eukaryotic cells and after invasion, is the major adhesin in infected tissue. Constitutes an alternative uptake pathway under conditions in which invasin synthesis is repressed. The sequence is that of Adhesin YadA (yadA) from Yersinia pseudotuberculosis serotype I (strain IP32953).